We begin with the raw amino-acid sequence, 245 residues long: Alanyl-tRNA editing protein AlaX-M (245 aa).

H107, H111, C210, and H214 together coordinate Zn(2+).

It belongs to the class-II aminoacyl-tRNA synthetase family. Editing domain AlaX-M subfamily. The cofactor is Zn(2+).

It is found in the cytoplasm. Functionally, functions in trans to edit the amino acid moiety from mischarged charged tRNA(Ala). In Methanosarcina acetivorans (strain ATCC 35395 / DSM 2834 / JCM 12185 / C2A), this protein is Alanyl-tRNA editing protein AlaX-M (alaXM).